The sequence spans 684 residues: Coiled-coil domain-containing protein 62 (684 aa).

Coiled coils occupy residues 11–160 (RQNI…QALT) and 199–322 (TCIV…ESKA). The disordered stretch occupies residues 579–603 (SLGSSKSALREDETESSSNKKNSPT). Residues 594-603 (SSSNKKNSPT) are compositionally biased toward polar residues. 2 consecutive short sequence motifs (LXXLL motif) follow at residues 634–638 (LQRLL) and 650–654 (LSTLL). The segment at 657–684 (SHENLTGSATNKSEVPEESAQKNTFVSY) is disordered. The segment covering 659-669 (ENLTGSATNKS) has biased composition (polar residues).

Interacts with ESR1 and ESR2 in the presence of estradiol/E2. The interaction with ESR2 recruits CCDC62 to ER target genes, including cyclin-D1/CCND1 AP-1 promoter. Interacts with GOPC. Highly expressed in adult testis. Expressed in both prostate epithelial and stromal cells, with predominant expression in epithelial cells (at protein level). Not detected in prostate by RT-PCR. Overexpressed in various cancers.

The protein localises to the cytoplasm. The protein resides in the nucleus. It localises to the cytoplasmic vesicle. It is found in the secretory vesicle. Its subcellular location is the acrosome. Nuclear receptor coactivator that can enhance preferentially estrogen receptors ESR1 and ESR2 transactivation. Also modulates progesterone/PGR, glucocorticoid/NR3C1 and androgen/AR receptors transactivation, although at lower level; little effect on vitamin D receptor/VDR. Required for normal spermiogenesis. It probably plays a role in acrosome formation. This chain is Coiled-coil domain-containing protein 62 (CCDC62), found in Homo sapiens (Human).